A 433-amino-acid chain; its full sequence is PBSX phage terminase large subunit (433 aa).

The protein to B.subtilis YqaT and phage SPP1 terminase large subunit. Dimer of a small and a large subunit.

In terms of biological role, functions as a terminase. The chain is PBSX phage terminase large subunit (xtmB) from Bacillus subtilis (strain 168).